The following is a 260-amino-acid chain: 3'-5' ssDNA/RNA exonuclease TatD (260 aa).

Positions 92, 128, and 153 each coordinate a divalent metal cation.

It belongs to the metallo-dependent hydrolases superfamily. TatD-type hydrolase family. TatD subfamily. In terms of assembly, monomer. Mg(2+) is required as a cofactor.

The protein resides in the cytoplasm. In terms of biological role, 3'-5' exonuclease that prefers single-stranded DNA and RNA. May play a role in the H(2)O(2)-induced DNA damage repair. The chain is 3'-5' ssDNA/RNA exonuclease TatD from Pectobacterium parmentieri (strain WPP163) (Pectobacterium wasabiae (strain WPP163)).